The following is a 118-amino-acid chain: Light-harvesting protein B-800/850 gamma chain (118 aa).

Functionally, seems to be required for the LH-II stabilization. The protein is Light-harvesting protein B-800/850 gamma chain (pucE) of Rhodobacter capsulatus (Rhodopseudomonas capsulata).